The chain runs to 269 residues: 4-hydroxy-tetrahydrodipicolinate reductase (269 aa).

NAD(+) is bound by residues 10 to 15, Glu36, 99 to 101, and 123 to 126; these read GANGRM, GTT, and AANF. The active-site Proton donor/acceptor is the His156. His157 is a binding site for (S)-2,3,4,5-tetrahydrodipicolinate. Lys160 serves as the catalytic Proton donor. 166-167 serves as a coordination point for (S)-2,3,4,5-tetrahydrodipicolinate; it reads GT.

This sequence belongs to the DapB family.

The protein localises to the cytoplasm. The catalysed reaction is (S)-2,3,4,5-tetrahydrodipicolinate + NAD(+) + H2O = (2S,4S)-4-hydroxy-2,3,4,5-tetrahydrodipicolinate + NADH + H(+). The enzyme catalyses (S)-2,3,4,5-tetrahydrodipicolinate + NADP(+) + H2O = (2S,4S)-4-hydroxy-2,3,4,5-tetrahydrodipicolinate + NADPH + H(+). The protein operates within amino-acid biosynthesis; L-lysine biosynthesis via DAP pathway; (S)-tetrahydrodipicolinate from L-aspartate: step 4/4. Its function is as follows. Catalyzes the conversion of 4-hydroxy-tetrahydrodipicolinate (HTPA) to tetrahydrodipicolinate. The chain is 4-hydroxy-tetrahydrodipicolinate reductase from Neisseria gonorrhoeae (strain ATCC 700825 / FA 1090).